Here is a 272-residue protein sequence, read N- to C-terminus: Orotidine 5'-phosphate decarboxylase (272 aa).

K93 functions as the Proton donor in the catalytic mechanism.

This sequence belongs to the OMP decarboxylase family. Type 2 subfamily.

The catalysed reaction is orotidine 5'-phosphate + H(+) = UMP + CO2. Its pathway is pyrimidine metabolism; UMP biosynthesis via de novo pathway; UMP from orotate: step 2/2. The sequence is that of Orotidine 5'-phosphate decarboxylase from Roseiflexus castenholzii (strain DSM 13941 / HLO8).